We begin with the raw amino-acid sequence, 212 residues long: Octanoyltransferase (212 aa).

Residues 34-208 (GQRQDTLILL…AFERQFNARC (175 aa)) form the BPL/LPL catalytic domain. Residues 72-79 (RGGQVTYH), 139-141 (SIG), and 152-154 (GLS) each bind substrate. The active-site Acyl-thioester intermediate is the cysteine 170.

Belongs to the LipB family.

It is found in the cytoplasm. The catalysed reaction is octanoyl-[ACP] + L-lysyl-[protein] = N(6)-octanoyl-L-lysyl-[protein] + holo-[ACP] + H(+). It participates in protein modification; protein lipoylation via endogenous pathway; protein N(6)-(lipoyl)lysine from octanoyl-[acyl-carrier-protein]: step 1/2. Catalyzes the transfer of endogenously produced octanoic acid from octanoyl-acyl-carrier-protein onto the lipoyl domains of lipoate-dependent enzymes. Lipoyl-ACP can also act as a substrate although octanoyl-ACP is likely to be the physiological substrate. This Magnetococcus marinus (strain ATCC BAA-1437 / JCM 17883 / MC-1) protein is Octanoyltransferase.